A 93-amino-acid chain; its full sequence is Large ribosomal subunit protein eL42 (93 aa).

Residues cysteine 11 and cysteine 14 each coordinate Zn(2+). The C4-type zinc-finger motif lies at 11-75 (CPNCDEHHQL…TDLKYRCSEC (65 aa)). The tract at residues 24–62 (KVRSGRSSGMKWDARRTKRANASIGNHGRFSKVPVGNKP) is disordered. Cysteine 72 and cysteine 75 together coordinate Zn(2+).

This sequence belongs to the eukaryotic ribosomal protein eL42 family. As to quaternary structure, part of the 50S ribosomal subunit. Zn(2+) serves as cofactor.

Functionally, binds to the 23S rRNA. This Halobacterium salinarum (strain ATCC 700922 / JCM 11081 / NRC-1) (Halobacterium halobium) protein is Large ribosomal subunit protein eL42.